Reading from the N-terminus, the 543-residue chain is Zinc finger protein egl-43 (543 aa).

The positive regulatory (PR) domain stretch occupies residues 2–62 (SIDTDFLTSV…NLIKEADDGE (61 aa)). C2H2-type zinc fingers lie at residues 159-181 (HKCG…SHIH) and 187-209 (FRCH…RRVH). The C2H2-type 3; atypical zinc-finger motif lies at 213-233 (WTCPTCQSQMPSQAALTKHRP). Positions 299-380 (PDAECSSGHA…TSTKKRPTSH (82 aa)) are disordered. The span at 306–317 (GHASESSPTTTE) shows a compositional bias: polar residues. The segment covering 335–348 (TTSKSDDGEDRDSI) has biased composition (basic and acidic residues). C2H2-type zinc fingers lie at residues 444–466 (YTCK…LRTH) and 472–495 (YKCQ…RNIH). Residues 496 to 543 (NKPNTSLTPHNHHRQRSLHNSTSTSTTTTTVHHPLLHLPGTSVPVPKV) form a disordered region. Residues 513–533 (LHNSTSTSTTTTTVHHPLLHL) show a composition bias toward low complexity.

The protein localises to the nucleus. Its function is as follows. Probable transcription factor, required for migration of the hermaphrodite-specific motor neurons (HSNs) from the tail to the gonad primordium during HSN cell differentiation. Required for phasmid neuron development. Required to specify the pi-cell fate of ventral uterine precursor cell (VU) cells. Functionally, probable transcription factor, involved in lin-12 (Notch)-dependent anchor cell (AC) and ventral uterine (VU) precursor cell fate specification and in AC invasion. Prevents AC proliferation after AC cell specification by repressing lin-12 expression. May form a positive feedback loop, together with the transcription factor fos-1, that maintains mutual high levels of expression and so activates AC invasion. Dispensable for anchor cell (AC) invasion and for preventing AC proliferation. This is Zinc finger protein egl-43 from Caenorhabditis elegans.